We begin with the raw amino-acid sequence, 560 residues long: Formate--tetrahydrofolate ligase (560 aa).

69–76 (TPAGEGKS) provides a ligand contact to ATP.

It belongs to the formate--tetrahydrofolate ligase family.

The enzyme catalyses (6S)-5,6,7,8-tetrahydrofolate + formate + ATP = (6R)-10-formyltetrahydrofolate + ADP + phosphate. Its pathway is one-carbon metabolism; tetrahydrofolate interconversion. The polypeptide is Formate--tetrahydrofolate ligase (Listeria innocua serovar 6a (strain ATCC BAA-680 / CLIP 11262)).